Here is a 203-residue protein sequence, read N- to C-terminus: uncharacterized protein (203 aa).

A helical membrane pass occupies residues 9 to 29 (LVVLFTIVTFGLVSPPAALMA).

The protein resides in the membrane. This is an uncharacterized protein from Bacillus subtilis (strain 168).